A 475-amino-acid chain; its full sequence is UDP-N-acetylmuramate--L-alanine ligase (475 aa).

125-131 (GTHGKTT) lines the ATP pocket.

Belongs to the MurCDEF family.

The protein localises to the cytoplasm. The enzyme catalyses UDP-N-acetyl-alpha-D-muramate + L-alanine + ATP = UDP-N-acetyl-alpha-D-muramoyl-L-alanine + ADP + phosphate + H(+). It participates in cell wall biogenesis; peptidoglycan biosynthesis. Functionally, cell wall formation. This is UDP-N-acetylmuramate--L-alanine ligase from Glaesserella parasuis serovar 5 (strain SH0165) (Haemophilus parasuis).